Here is a 1034-residue protein sequence, read N- to C-terminus: Isoleucine--tRNA ligase (1034 aa).

The short motif at 48-58 (PTANGKPHIGH) is the 'HIGH' region element. Positions 588–592 (KMSKH) match the 'KMSKS' region motif. Residue Lys591 participates in ATP binding.

It belongs to the class-I aminoacyl-tRNA synthetase family. IleS type 2 subfamily. In terms of assembly, monomer. It depends on Zn(2+) as a cofactor.

It is found in the cytoplasm. The enzyme catalyses tRNA(Ile) + L-isoleucine + ATP = L-isoleucyl-tRNA(Ile) + AMP + diphosphate. In terms of biological role, catalyzes the attachment of isoleucine to tRNA(Ile). As IleRS can inadvertently accommodate and process structurally similar amino acids such as valine, to avoid such errors it has two additional distinct tRNA(Ile)-dependent editing activities. One activity is designated as 'pretransfer' editing and involves the hydrolysis of activated Val-AMP. The other activity is designated 'posttransfer' editing and involves deacylation of mischarged Val-tRNA(Ile). The protein is Isoleucine--tRNA ligase of Clostridium kluyveri (strain ATCC 8527 / DSM 555 / NBRC 12016 / NCIMB 10680 / K1).